The sequence spans 213 residues: Kynurenine formamidase (213 aa).

Trp15 lines the substrate pocket. Zn(2+) contacts are provided by His45, His49, and Asp51. His55 serves as the catalytic Proton donor/acceptor. His157 and Glu169 together coordinate Zn(2+).

It belongs to the Cyclase 1 superfamily. KynB family. In terms of assembly, homodimer. Zn(2+) serves as cofactor.

It catalyses the reaction N-formyl-L-kynurenine + H2O = L-kynurenine + formate + H(+). The protein operates within amino-acid degradation; L-tryptophan degradation via kynurenine pathway; L-kynurenine from L-tryptophan: step 2/2. Its function is as follows. Catalyzes the hydrolysis of N-formyl-L-kynurenine to L-kynurenine, the second step in the kynurenine pathway of tryptophan degradation. In Deinococcus geothermalis (strain DSM 11300 / CIP 105573 / AG-3a), this protein is Kynurenine formamidase.